Here is a 129-residue protein sequence, read N- to C-terminus: Flagellar assembly factor FliW 2 (129 aa).

It belongs to the FliW family. In terms of assembly, interacts with translational regulator CsrA and flagellin(s).

The protein resides in the cytoplasm. Its function is as follows. Acts as an anti-CsrA protein, binds CsrA and prevents it from repressing translation of its target genes, one of which is flagellin. Binds to flagellin and participates in the assembly of the flagellum. This is Flagellar assembly factor FliW 2 from Helicobacter pylori (strain HPAG1).